The primary structure comprises 713 residues: Cyclomaltodextrin glucanotransferase (713 aa).

Residues 1–27 (MKKISKLTTALALSLSLALSLLGPAHA) form the signal peptide. The interval 28–165 (APDTSVSNKQ…NIKVIIDFAP (138 aa)) is A1. The Ca(2+) site is built by aspartate 54, asparagine 56, asparagine 59, and asparagine 60. Cysteine 70 and cysteine 77 are joined by a disulfide. Ca(2+)-binding residues include glycine 78 and aspartate 80. 127 to 128 (YW) provides a ligand contact to substrate. Position 166 (asparagine 166) interacts with Ca(2+). Residues 166–229 (NHTSPASLDQ…NLYDLADLNH (64 aa)) are b. Substrate is bound at residue histidine 167. Isoleucine 217 is a binding site for Ca(2+). Substrate is bound at residue 220–223 (NLYD). Aspartate 226 lines the Ca(2+) pocket. Residues 230 to 433 (NNSTVDTYLK…LRKSNPAIAY (204 aa)) form an A2 region. Residue arginine 254 coordinates substrate. The active-site Nucleophile is aspartate 256. 259–260 (KH) lines the substrate pocket. Histidine 260 contacts Ca(2+). Glutamate 284 acts as the Proton donor in catalysis. Positions 354, 398, and 402 each coordinate substrate. A c region spans residues 434-522 (GTTQERWINN…GTAVWQYTTA (89 aa)). The d stretch occupies residues 523–609 (VTAPTIGHVG…SNVHDNFEVL (87 aa)). The IPT/TIG domain maps to 526 to 607 (PTIGHVGPMM…TSSNVHDNFE (82 aa)). In terms of domain architecture, CBM20 spans 608 to 713 (VLSGDQVSVR…TATINVNWQP (106 aa)). Residues 610 to 713 (SGDQVSVRFV…TATINVNWQP (104 aa)) are e.

It belongs to the glycosyl hydrolase 13 family. Monomer. It depends on Ca(2+) as a cofactor.

It is found in the secreted. It catalyses the reaction Cyclizes part of a (1-&gt;4)-alpha-D-glucan chain by formation of a (1-&gt;4)-alpha-D-glucosidic bond.. The sequence is that of Cyclomaltodextrin glucanotransferase (cgt) from Bacillus sp. (strain 17-1).